The chain runs to 119 residues: uncharacterized protein (119 aa).

This is an uncharacterized protein from Escherichia coli (strain K12).